The following is a 138-amino-acid chain: Small ribosomal subunit protein uS11c (138 aa).

The disordered stretch occupies residues 1 to 22 (MAKAIPKISSRRNGRISSRKGA). Residues 9 to 22 (SSRRNGRISSRKGA) are compositionally biased toward basic residues.

It belongs to the universal ribosomal protein uS11 family. In terms of assembly, part of the 30S ribosomal subunit.

The protein resides in the plastid. It is found in the chloroplast. In Solanum bulbocastanum (Wild potato), this protein is Small ribosomal subunit protein uS11c.